A 393-amino-acid polypeptide reads, in one-letter code: Double-stranded RNA-binding protein 5 (393 aa).

DRBM domains lie at 1-70 (MYKN…VLSS) and 87-155 (IYKN…SLKK). Disordered stretches follow at residues 220–251 (ASSS…KSSK) and 335–371 (NPNL…QEKK). The segment covering 347 to 361 (VNEFTSSNNSCSVLN) has biased composition (polar residues).

Heterodimer with DRB1, DRB2 or DRB4. Interacts with DCL1 and DCL3. In terms of tissue distribution, expressed in the shoot apical meristem (SAM).

Functionally, binds double-stranded RNA. May be involved in RNA-mediated silencing. This chain is Double-stranded RNA-binding protein 5 (DRB5), found in Arabidopsis thaliana (Mouse-ear cress).